Reading from the N-terminus, the 763-residue chain is Phosphoglycerol transferase I (763 aa).

The next 4 membrane-spanning stretches (helical) occupy residues 1-21 (MSELLSVALFLASVLIYAWKA), 26-46 (WWFAATLTVLGLFVILNITLY), 77-97 (ILPGIGIALALVAVFGALGWI), and 108-128 (VGYSLLALLLALGSVDASPAF).

This sequence belongs to the OpgB family.

The protein resides in the cell inner membrane. It catalyses the reaction a phosphatidylglycerol + a membrane-derived-oligosaccharide D-glucose = a 1,2-diacyl-sn-glycerol + a membrane-derived-oligosaccharide 6-(glycerophospho)-D-glucose.. It functions in the pathway glycan metabolism; osmoregulated periplasmic glucan (OPG) biosynthesis. Functionally, transfers a phosphoglycerol residue from phosphatidylglycerol to the membrane-bound nascent glucan backbones. The chain is Phosphoglycerol transferase I from Salmonella paratyphi B (strain ATCC BAA-1250 / SPB7).